The chain runs to 264 residues: Secretory carrier-associated membrane protein 4 (264 aa).

Positions 1 to 33 (MNRHHDPNPFDEDEEIVNPFSKGGGRVPAASRP) are disordered. Residues 1–122 (MNRHHDPNPF…AQKLQYLAFA (122 aa)) are Cytoplasmic-facing. A coiled-coil region spans residues 51–85 (MNDSSQKQRKLADWEAELRKKEMDIKRREEAIAKF). 4 helical membrane-spanning segments follow: residues 123 to 143 (SWLGIVLCLVFNVIATMVCWI), 150 to 170 (IFFLATIYALIGCPLSYVLWY), 185 to 205 (FGWFFFTYLIHIGFCIVAAIA), and 233 to 253 (IFYFIGFGLFCLESLLSLWVL). Topologically, residues 254–264 (QKIYLYFRGNK) are cytoplasmic.

This sequence belongs to the SCAMP family.

The protein localises to the cell membrane. It is found in the cytoplasmic vesicle. The protein resides in the secretory vesicle membrane. Its function is as follows. Probably involved in membrane trafficking. The chain is Secretory carrier-associated membrane protein 4 (SCAMP4) from Arabidopsis thaliana (Mouse-ear cress).